A 447-amino-acid chain; its full sequence is Naphthalene 1,2-dioxygenase system, large oxygenase component (447 aa).

A Rieske domain is found at 37-135 (WLFLTHDSLI…IKKKCLGLKE (99 aa)). Cysteine 79, histidine 81, cysteine 99, and histidine 102 together coordinate [2Fe-2S] cluster. 3 residues coordinate Fe cation: histidine 206, histidine 211, and aspartate 360.

Belongs to the bacterial ring-hydroxylating dioxygenase alpha subunit family. In terms of assembly, the naphthalene dioxygenase (NDO) multicomponent enzyme system is composed of an electron transfer component and a dioxygenase component (iron sulfur protein (ISP)). The electron transfer component is composed of a ferredoxin reductase (NagAa) and a ferredoxin (NagAb), and the dioxygenase component is formed by a large alpha subunit (NagAc) and a small beta subunit (NagAd). It depends on [2Fe-2S] cluster as a cofactor. The cofactor is Fe(2+).

The enzyme catalyses naphthalene + NADH + O2 + H(+) = (1R,2S)-1,2-dihydronaphthalene-1,2-diol + NAD(+). Its pathway is aromatic compound metabolism; naphthalene degradation. Its function is as follows. Component of the naphthalene dioxygenase (NDO) multicomponent enzyme system which catalyzes the incorporation of both atoms of molecular oxygen into naphthalene to form cis-(1R,2S)-dihydroxy-1,2-dihydronaphthalene. The alpha subunit has a catalytic role in the holoenzyme. Also able to use styrene as substrate. This Ralstonia sp protein is Naphthalene 1,2-dioxygenase system, large oxygenase component.